The sequence spans 217 residues: Octanoyltransferase (217 aa).

Residues 32–207 (SESHDELWIV…TFSQLLGYQH (176 aa)) enclose the BPL/LPL catalytic domain. Substrate contacts are provided by residues 71 to 78 (RGGQVTYH), 138 to 140 (SLG), and 151 to 153 (GLA). Residue cysteine 169 is the Acyl-thioester intermediate of the active site.

It belongs to the LipB family.

It localises to the cytoplasm. It carries out the reaction octanoyl-[ACP] + L-lysyl-[protein] = N(6)-octanoyl-L-lysyl-[protein] + holo-[ACP] + H(+). It participates in protein modification; protein lipoylation via endogenous pathway; protein N(6)-(lipoyl)lysine from octanoyl-[acyl-carrier-protein]: step 1/2. Catalyzes the transfer of endogenously produced octanoic acid from octanoyl-acyl-carrier-protein onto the lipoyl domains of lipoate-dependent enzymes. Lipoyl-ACP can also act as a substrate although octanoyl-ACP is likely to be the physiological substrate. This is Octanoyltransferase from Shewanella baltica (strain OS223).